A 175-amino-acid chain; its full sequence is Probable DNA-directed RNA polymerase subunit delta (175 aa).

One can recognise an HTH HARE-type domain in the interval 14–81; that stretch reads CSMIEVVHSV…GENRWGLRSW (68 aa). The segment at 91-175 is disordered; that stretch reads ILPQPKPKKK…DETEEEEEEL (85 aa). Over residues 106 to 175 the composition is skewed to acidic residues; the sequence is DGFDDYIEED…DETEEEEEEL (70 aa).

This sequence belongs to the RpoE family. RNAP is composed of a core of 2 alpha, a beta and a beta' subunits. The core is associated with a delta subunit and one of several sigma factors.

In terms of biological role, participates in both the initiation and recycling phases of transcription. In the presence of the delta subunit, RNAP displays an increased specificity of transcription, a decreased affinity for nucleic acids, and an increased efficiency of RNA synthesis because of enhanced recycling. The sequence is that of Probable DNA-directed RNA polymerase subunit delta from Bacillus anthracis.